The following is a 167-amino-acid chain: NADH-quinone oxidoreductase subunit B 2 (167 aa).

4 residues coordinate [4Fe-4S] cluster: Cys-38, Cys-39, Cys-103, and Cys-132.

It belongs to the complex I 20 kDa subunit family. In terms of assembly, NDH-1 is composed of 14 different subunits. Subunits NuoB, C, D, E, F, and G constitute the peripheral sector of the complex. It depends on [4Fe-4S] cluster as a cofactor.

The protein localises to the cell inner membrane. It carries out the reaction a quinone + NADH + 5 H(+)(in) = a quinol + NAD(+) + 4 H(+)(out). Functionally, NDH-1 shuttles electrons from NADH, via FMN and iron-sulfur (Fe-S) centers, to quinones in the respiratory chain. The immediate electron acceptor for the enzyme in this species is believed to be ubiquinone. Couples the redox reaction to proton translocation (for every two electrons transferred, four hydrogen ions are translocated across the cytoplasmic membrane), and thus conserves the redox energy in a proton gradient. The polypeptide is NADH-quinone oxidoreductase subunit B 2 (Rhizobium etli (strain CIAT 652)).